The chain runs to 128 residues: uncharacterized protein (128 aa).

This is an uncharacterized protein from Homo sapiens (Human).